The sequence spans 225 residues: Small ribosomal subunit protein uS7 (225 aa).

Serine 2 bears the N-acetylserine mark. A Phosphothreonine modification is found at threonine 27. Residues lysine 45 and lysine 203 each participate in a glycyl lysine isopeptide (Lys-Gly) (interchain with G-Cter in ubiquitin) cross-link.

Belongs to the universal ribosomal protein uS7 family. In terms of assembly, component of the small ribosomal subunit (SSU). Mature yeast ribosomes consist of a small (40S) and a large (60S) subunit. The 40S small subunit contains 1 molecule of ribosomal RNA (18S rRNA) and 33 different proteins (encoded by 57 genes). The large 60S subunit contains 3 rRNA molecules (25S, 5.8S and 5S rRNA) and 46 different proteins (encoded by 81 genes). Post-translationally, N-terminally acetylated by acetyltransferase NatA.

The protein localises to the cytoplasm. Its function is as follows. Component of the ribosome, a large ribonucleoprotein complex responsible for the synthesis of proteins in the cell. The small ribosomal subunit (SSU) binds messenger RNAs (mRNAs) and translates the encoded message by selecting cognate aminoacyl-transfer RNA (tRNA) molecules. The large subunit (LSU) contains the ribosomal catalytic site termed the peptidyl transferase center (PTC), which catalyzes the formation of peptide bonds, thereby polymerizing the amino acids delivered by tRNAs into a polypeptide chain. The nascent polypeptides leave the ribosome through a tunnel in the LSU and interact with protein factors that function in enzymatic processing, targeting, and the membrane insertion of nascent chains at the exit of the ribosomal tunnel. The polypeptide is Small ribosomal subunit protein uS7 (Saccharomyces cerevisiae (strain ATCC 204508 / S288c) (Baker's yeast)).